A 290-amino-acid chain; its full sequence is Festuclavine dehydrogenase easG (290 aa).

It belongs to the fgaFS/easG family.

The catalysed reaction is festuclavine + NAD(+) = 6,8-dimethyl-6,7-didehydroergoline + NADH + H(+). The protein operates within alkaloid biosynthesis; ergot alkaloid biosynthesis. In terms of biological role, festuclavine dehydrogenase; part of the gene cluster that mediates the biosynthesis of fumiclavanine C, a fungal ergot alkaloid. DmaW catalyzes the first step of ergot alkaloid biosynthesis by condensing dimethylallyl diphosphate (DMAP) and tryptophan to form 4-dimethylallyl-L-tryptophan. The second step is catalyzed by the methyltransferase easF that methylates 4-dimethylallyl-L-tryptophan in the presence of S-adenosyl-L-methionine, resulting in the formation of 4-dimethylallyl-L-abrine. The catalase easC and the FAD-dependent oxidoreductase easE then transform 4-dimethylallyl-L-abrine to chanoclavine-I which is further oxidized by EasD in the presence of NAD(+), resulting in the formation of chanoclavine-I aldehyde. EasA reduces chanoclavine-I aldehyde to dihydrochanoclavine-I aldehyde that spontaneously dehydrates to form 6,8-dimethyl-6,7-didehydroergoline. EasG then catalyzes the reduction of 6,8-dimethyl-6,7-didehydroergoline to form festuclavine. Hydrolysis of festuclavine by easM then leads to the formation of fumigaclavine B which is in turn acetylated by easN to fumigaclavine A. Finally, easL catalyzes the conversion of fumigaclavine A into fumigaclavine C by attaching a dimethylallyl moiety to C-2 of the indole nucleus. The sequence is that of Festuclavine dehydrogenase easG from Aspergillus fumigatus (strain ATCC MYA-4609 / CBS 101355 / FGSC A1100 / Af293) (Neosartorya fumigata).